Here is a 1049-residue protein sequence, read N- to C-terminus: Dyslexia-associated protein KIAA0319-like protein (1049 aa).

The Cytoplasmic segment spans residues 1-29 (MEKRLGVKPNPASWILSGYYWQTSAKWLR). A helical transmembrane segment spans residues 30–50 (TLYLFYTCFCFSVLWLSTDAS). Positions 49–127 (ASESRCQQGK…AFRTHSSNSM (79 aa)) constitute an MANSC domain. Residues 51-932 (ESRCQQGKTQ…ESNCEWSVLY (882 aa)) are Extracellular-facing. A disordered region spans residues 234-277 (TTDLTAELPGGPKNVSAQPEIPEGLATTPSTQQVKSSEKTQIAV). Asn247, Asn395, and Asn487 each carry an N-linked (GlcNAc...) asparagine glycan. PKD domains are found at residues 310-401 (VVSA…VKPE), 409-498 (IAIV…VNKA), 504-594 (VANA…VQPE), 600-688 (QADA…VKEE), and 694-785 (IAKI…VKPD). The chain crosses the membrane as a helical span at residues 933-953 (VIIATFVIVVALGILSWTVIC). Over 954 to 1049 (CCKRQKGKPK…KARSPREEIL (96 aa)) the chain is Cytoplasmic. Thr974 is subject to Phosphothreonine. A phosphoserine mark is found at Ser978, Ser1009, and Ser1031. The disordered stretch occupies residues 1022-1049 (GKLLHGQNGSVPNGQTPLKARSPREEIL). A compositionally biased stretch (polar residues) spans 1028 to 1037 (QNGSVPNGQT). At Thr1037 the chain carries Phosphothreonine.

As to quaternary structure, interacts with RTN4R. Post-translationally, N-glycosylated.

It localises to the cytoplasmic granule membrane. Its subcellular location is the golgi apparatus membrane. It is found in the golgi apparatus. The protein localises to the trans-Golgi network membrane. The protein resides in the cell membrane. Functionally, possible role in axon guidance through interaction with RTN4R. The polypeptide is Dyslexia-associated protein KIAA0319-like protein (Pongo abelii (Sumatran orangutan)).